The sequence spans 840 residues: Aconitase AMT8 (840 aa).

258–260 contacts substrate; that stretch reads DSH. The [4Fe-4S] cluster site is built by Cys-450, Cys-513, and Cys-516. Substrate is bound by residues Arg-536, Arg-541, and 709-710; that span reads SR.

The protein belongs to the aconitase/IPM isomerase family.

It participates in mycotoxin biosynthesis. In terms of biological role, aconitase; part of the gene clusters that mediate the biosynthesis of AM-toxins, host-selective toxins (HSTs) causing Alternaria blotch on apple, a worldwide distributed disease. AM-toxins are cyclic depsipeptides containing the 3 residues 2-hydroxy-isovaleric acid (2-HIV), dehydroalanine, L-alanine which are common for all 3 AM-toxins I to III. The fourth precursor is L-alpha-amino-methoxyphenyl-valeric acid (L-Amv) for AM-toxin I, L-alpha-amino-phenyl-valeric acid (L-Apv) for AM-toxin II, and L-alpha-amino-hydroxyphenyl-valeric acid (L-Ahv) for AM-toxin III. AM-toxins have two target sites for affecting susceptible apple cells; they cause invagination of the plasma membrane and electrolyte loss and chloroplast disorganization. The non-ribosomal peptide synthetase AMT1 contains 4 catalytic modules and is responsible for activation of each residue in AM-toxin. The aldo-keto reductase AMT2 catalyzes the conversion of 2-keto-isovaleric acid (2-KIV) to 2-hydroxy-isovaleric acid (2-HIV), one of the precursor residues incorporated by AMT1 during AM-toxin biosynthesis, by reduction of its ketone to an alcohol. The cytochrome P450 monooxygenase AMT3 and the thioesterase AMT4 are also important for AM-toxin production, but their exact function within the AM-toxin biosynthesis are not known yet. Up to 21 proteins (including AMT1 to AMT4) are predicted to be involved in AM-toxin biosynthesis since their expression ishighly up-regulated in AM-toxin-producing cultures. This Alternaria alternata (Alternaria rot fungus) protein is Aconitase AMT8.